A 342-amino-acid polypeptide reads, in one-letter code: Phenylalanine--tRNA ligase alpha subunit (342 aa).

Position 255 (Glu-255) interacts with Mg(2+).

This sequence belongs to the class-II aminoacyl-tRNA synthetase family. Phe-tRNA synthetase alpha subunit type 1 subfamily. In terms of assembly, tetramer of two alpha and two beta subunits. It depends on Mg(2+) as a cofactor.

It localises to the cytoplasm. It catalyses the reaction tRNA(Phe) + L-phenylalanine + ATP = L-phenylalanyl-tRNA(Phe) + AMP + diphosphate + H(+). In Pelotomaculum thermopropionicum (strain DSM 13744 / JCM 10971 / SI), this protein is Phenylalanine--tRNA ligase alpha subunit.